The following is a 951-amino-acid chain: Valine--tRNA ligase (951 aa).

A 'HIGH' region motif is present at residues 42 to 52 (PNVTGSLHMGH). The short motif at 554–558 (KMSKS) is the 'KMSKS' region element. Lys-557 contributes to the ATP binding site. Residues 880–944 (AGLINKEDEL…AEAKAKLIEQ (65 aa)) are a coiled coil.

It belongs to the class-I aminoacyl-tRNA synthetase family. ValS type 1 subfamily. Monomer.

The protein resides in the cytoplasm. The enzyme catalyses tRNA(Val) + L-valine + ATP = L-valyl-tRNA(Val) + AMP + diphosphate. In terms of biological role, catalyzes the attachment of valine to tRNA(Val). As ValRS can inadvertently accommodate and process structurally similar amino acids such as threonine, to avoid such errors, it has a 'posttransfer' editing activity that hydrolyzes mischarged Thr-tRNA(Val) in a tRNA-dependent manner. The protein is Valine--tRNA ligase of Shigella flexneri.